The chain runs to 303 residues: Aspartate carbamoyltransferase catalytic subunit (303 aa).

Arginine 54 and threonine 55 together coordinate carbamoyl phosphate. Position 82 (lysine 82) interacts with L-aspartate. Residues arginine 104, histidine 132, and glutamine 135 each coordinate carbamoyl phosphate. L-aspartate-binding residues include arginine 165 and arginine 221. Residues glycine 261 and proline 262 each coordinate carbamoyl phosphate.

The protein belongs to the aspartate/ornithine carbamoyltransferase superfamily. ATCase family. In terms of assembly, heterododecamer (2C3:3R2) of six catalytic PyrB chains organized as two trimers (C3), and six regulatory PyrI chains organized as three dimers (R2).

The catalysed reaction is carbamoyl phosphate + L-aspartate = N-carbamoyl-L-aspartate + phosphate + H(+). Its pathway is pyrimidine metabolism; UMP biosynthesis via de novo pathway; (S)-dihydroorotate from bicarbonate: step 2/3. Functionally, catalyzes the condensation of carbamoyl phosphate and aspartate to form carbamoyl aspartate and inorganic phosphate, the committed step in the de novo pyrimidine nucleotide biosynthesis pathway. This is Aspartate carbamoyltransferase catalytic subunit from Koribacter versatilis (strain Ellin345).